Here is a 169-residue protein sequence, read N- to C-terminus: Lipoprotein signal peptidase (169 aa).

The next 3 membrane-spanning stretches (helical) occupy residues 12–32 (WLWLVVVVLVLDFASKQWILG), 70–90 (WFFAGIAVAIVAVLLVMMYRS), and 102–122 (AFIIGGALGNLFDRLWHGFVV). Residues aspartate 123 and aspartate 141 contribute to the active site. Residues 137–157 (FNLADSFICVGAAMIVLEGFL) traverse the membrane as a helical segment.

This sequence belongs to the peptidase A8 family.

The protein localises to the cell inner membrane. It catalyses the reaction Release of signal peptides from bacterial membrane prolipoproteins. Hydrolyzes -Xaa-Yaa-Zaa-|-(S,diacylglyceryl)Cys-, in which Xaa is hydrophobic (preferably Leu), and Yaa (Ala or Ser) and Zaa (Gly or Ala) have small, neutral side chains.. Its pathway is protein modification; lipoprotein biosynthesis (signal peptide cleavage). This protein specifically catalyzes the removal of signal peptides from prolipoproteins. This chain is Lipoprotein signal peptidase, found in Serratia proteamaculans (strain 568).